The primary structure comprises 250 residues: MVKIEIGSVGDSFSVASLKAYLSEFIATLLFVFAGVGSALAFAKLTSDAALDPAGLVAVAVAHAFALFVGVSIAANISGGHLNPAVTLGLAVGGNITVITGFFYWIAQCLGSIVACLLLVFVTNGESVPTHGVAAGLGAIEGVVMEIVVTFALVYTVYATAADPKKGSLGTIAPIAIGFIVGANILAAGPFSGGSMNPARSFGPAVVSGDFSQIWIYWVGPLVGGALAGLIYGDVFIGSYAPAPTTESYP.

N-acetylmethionine is present on Met1. Topologically, residues 1–24 (MVKIEIGSVGDSFSVASLKAYLSE) are cytoplasmic. N6,N6-dimethyllysine is present on Lys3. A helical membrane pass occupies residues 25–45 (FIATLLFVFAGVGSALAFAKL). Over 46-53 (TSDAALDP) the chain is Vacuolar. A helical transmembrane segment spans residues 54-74 (AGLVAVAVAHAFALFVGVSIA). The Cytoplasmic segment spans residues 75–101 (ANISGGHLNPAVTLGLAVGGNITVITG). Residues 83 to 85 (NPA) carry the NPA 1 motif. Residues 102–122 (FFYWIAQCLGSIVACLLLVFV) traverse the membrane as a helical segment. The Vacuolar segment spans residues 123–133 (TNGESVPTHGV). The helical transmembrane segment at 134-154 (AAGLGAIEGVVMEIVVTFALV) threads the bilayer. The Cytoplasmic segment spans residues 155-168 (YTVYATAADPKKGS). The chain crosses the membrane as a helical span at residues 169–189 (LGTIAPIAIGFIVGANILAAG). The Vacuolar segment spans residues 190–210 (PFSGGSMNPARSFGPAVVSGD). The short motif at 197–199 (NPA) is the NPA 2 element. The helical transmembrane segment at 211–231 (FSQIWIYWVGPLVGGALAGLI) threads the bilayer. The Cytoplasmic portion of the chain corresponds to 232-250 (YGDVFIGSYAPAPTTESYP). Ser248 carries the phosphoserine modification.

The protein belongs to the MIP/aquaporin (TC 1.A.8) family. TIP (TC 1.A.8.10) subfamily. Interacts with cucumber mosaic virus (CMV) Protein 1a. As to expression, expressed above groung and in roots.

It is found in the vacuole membrane. Aquaporins facilitate the transport of water and small neutral solutes across cell membranes. The sequence is that of Probable aquaporin TIP2-2 (TIP2-2) from Arabidopsis thaliana (Mouse-ear cress).